We begin with the raw amino-acid sequence, 379 residues long: Cytochrome b (379 aa).

Helical transmembrane passes span 33 to 53 (FGSL…FLAM), 77 to 98 (WMIR…FMHV), 113 to 133 (WNIG…GYVL), and 178 to 198 (FFAF…VHLL). Residues H83 and H97 each coordinate heme b. Residues H182 and H196 each coordinate heme b. An a ubiquinone-binding site is contributed by H201. Transmembrane regions (helical) follow at residues 226–246 (IKDI…VLFS), 288–308 (LGGV…PMLH), 320–340 (LSQC…WIGG), and 347–367 (FITI…XLMP).

It belongs to the cytochrome b family. As to quaternary structure, the cytochrome bc1 complex contains 11 subunits: 3 respiratory subunits (MT-CYB, CYC1 and UQCRFS1), 2 core proteins (UQCRC1 and UQCRC2) and 6 low-molecular weight proteins (UQCRH/QCR6, UQCRB/QCR7, UQCRQ/QCR8, UQCR10/QCR9, UQCR11/QCR10 and a cleavage product of UQCRFS1). This cytochrome bc1 complex then forms a dimer. Heme b serves as cofactor.

The protein resides in the mitochondrion inner membrane. Functionally, component of the ubiquinol-cytochrome c reductase complex (complex III or cytochrome b-c1 complex) that is part of the mitochondrial respiratory chain. The b-c1 complex mediates electron transfer from ubiquinol to cytochrome c. Contributes to the generation of a proton gradient across the mitochondrial membrane that is then used for ATP synthesis. This is Cytochrome b (MT-CYB) from Chrotogale owstoni (Owston's palm civet).